The sequence spans 312 residues: Putative tricarboxylate transport protein, mitochondrial (312 aa).

Solcar repeat units follow at residues 23-111 (EKTV…LKSQ), 122-208 (VMRL…LKDW), and 218-303 (ISKP…IIEF). 6 helical membrane passes run 29 to 49 (IVIG…TEYV), 75 to 95 (VNGH…YGSI), 126 to 146 (LCGL…METV), 164 to 184 (FVHG…YKGV), 221 to 241 (PIVG…NTPI), and 286 to 306 (VCLD…FLDV).

It belongs to the mitochondrial carrier (TC 2.A.29) family.

Its subcellular location is the mitochondrion inner membrane. In terms of biological role, transport of citrate across inner mitochondrial membrane. The chain is Putative tricarboxylate transport protein, mitochondrial from Caenorhabditis elegans.